A 574-amino-acid chain; its full sequence is Eukaryotic translation initiation factor 3 subunit D (574 aa).

The tract at residues 153-178 (QRRGGNARQGQRGQGGRFGGDRPKER) is disordered. Residues 154-163 (RRGGNARQGQ) are compositionally biased toward low complexity. Residues 312-326 (PVETLTVSETSAEPP) form an RNA gate region. The tract at residues 555–574 (EGTFDSERESSEEENSDDDQ) is disordered. Residues 564-574 (SSEEENSDDDQ) are compositionally biased toward acidic residues.

This sequence belongs to the eIF-3 subunit D family. As to quaternary structure, component of the eukaryotic translation initiation factor 3 (eIF-3) complex.

It is found in the cytoplasm. In terms of biological role, mRNA cap-binding component of the eukaryotic translation initiation factor 3 (eIF-3) complex, which is involved in protein synthesis of a specialized repertoire of mRNAs and, together with other initiation factors, stimulates binding of mRNA and methionyl-tRNAi to the 40S ribosome. The eIF-3 complex specifically targets and initiates translation of a subset of mRNAs involved in cell proliferation. In the eIF-3 complex, eif3d specifically recognizes and binds the 7-methylguanosine cap of a subset of mRNAs. This Caenorhabditis briggsae protein is Eukaryotic translation initiation factor 3 subunit D.